We begin with the raw amino-acid sequence, 534 residues long: MQAARVDYIAPWWVVWLHSVPHVGLRLQPVNSTFSPGDESYQESLLFLGLVAAVCLGLNLIFLVAYLVCACHCRRDDAVQTKQHHSCCITWTAVVAGLICCAAVGVGFYGNSETNDGAYQLMYSLDDANHTFSGIDALVSGTTQKMKVDLEQHLARLSEIFAARGDYLQTLKFIQQMAGSVVVQLSGLPVWREVTMELTKLSDQTGYVEYYRWLSYLLLFILDLVICLIACLGLAKRSKCLLASMLCCGALSLLLSWASLAADGSAAVATSDFCVAPDTFILNVTEGQISTEVTRYYLYCSQSGSSPFQQTLTTFQRALTTMQIQVAGLLQFAVPLFSTAEEDLLAIQLLLNSSESSLHQLTAMVDCRGLHKDYLDALAGICYDGLQGLLYLGLFSFLAALAFSTMICAGPRAWKHFTTRNRDYDDIDDDDPFNPQAWRMAAHSPPRGQLHSFCSYSSGLGSQTSLQPPAQTISNAPVSEYMNQAMLFGRNPRYENVPLIGRASPPPTYSPSMRATYLSVADEHLRHYGNQFPA.

Topologically, residues 1–44 (MQAARVDYIAPWWVVWLHSVPHVGLRLQPVNSTFSPGDESYQES) are extracellular. Asparagine 31 carries an N-linked (GlcNAc...) asparagine glycan. Residues 45 to 65 (LLFLGLVAAVCLGLNLIFLVA) traverse the membrane as a helical segment. Residues 66 to 87 (YLVCACHCRRDDAVQTKQHHSC) are Cytoplasmic-facing. The helical transmembrane segment at 88 to 108 (CITWTAVVAGLICCAAVGVGF) threads the bilayer. Topologically, residues 109–213 (YGNSETNDGA…QTGYVEYYRW (105 aa)) are extracellular. Ca(2+)-binding residues include glutamate 113 and aspartate 116. Asparagine 129 is a glycosylation site (N-linked (GlcNAc) asparagine). An RGD motif is present at residues 164–166 (RGD). At threonine 199 the chain carries Phosphothreonine. A helical membrane pass occupies residues 214 to 234 (LSYLLLFILDLVICLIACLGL). Over 235–240 (AKRSKC) the chain is Cytoplasmic. Residues 241–261 (LLASMLCCGALSLLLSWASLA) form a helical membrane-spanning segment. The Extracellular segment spans residues 262–388 (ADGSAAVATS…AGICYDGLQG (127 aa)). Intrachain disulfides connect cysteine 274-cysteine 382 and cysteine 300-cysteine 367. Asparagine 283 is a glycosylation site (N-linked (GlcNAc...) asparagine). Asparagine 352 is a glycosylation site (N-linked (GlcNAc) asparagine). Residues 389 to 409 (LLYLGLFSFLAALAFSTMICA) form a helical membrane-spanning segment. At 410 to 534 (GPRAWKHFTT…LRHYGNQFPA (125 aa)) the chain is on the cytoplasmic side. A Phosphoserine modification is found at serine 504. Residues 506-509 (PPTY) carry the PY-motif; mediates interaction with NEDD4L motif.

This sequence belongs to the tweety family. In terms of assembly, homodimer. Forms cis-homodimers in the presence of Ca(+2) and forms monomers and trans-dimers in the absence of Ca(2+). Interacts with NEDD4L. Post-translationally, N- Glycosylated. Contains high-mannose, hybrid and complex oligosaccharides. Ubiquitinated by NEDD4L, leading to its proteasomal degradation. As to expression, expressed at higher level in brain and testis and at lower levels in heart, ovary, spleen and peripheral blood leukocytes. Up-regulated in 13 of 16 renal cell carcinoma samples examined. Up-regulated in colon carcinoma.

Its subcellular location is the cell membrane. The enzyme catalyses chloride(in) = chloride(out). It carries out the reaction L-glutamate(out) = L-glutamate(in). Calcium-independent, swelling-dependent volume-regulated anion channel (VRAC-swell) which plays a pivotal role in the process of regulatory volume decrease (RVD) in the brain through the efflux of anions like chloride and organic osmolytes like glutamate. Probable large-conductance Ca(2+)-activated chloride channel. The polypeptide is Protein tweety homolog 2 (TTYH2) (Homo sapiens (Human)).